A 395-amino-acid chain; its full sequence is Zinc finger protein 200 (395 aa).

Residues 157-208 are disordered; that stretch reads VNGSNPEGEDPEREPVENEDYREKSSDDDEMDSSLVSQQPPDNQEKERLNTS. The span at 169–181 shows a compositional bias: basic and acidic residues; that stretch reads REPVENEDYREKS. Positions 246–395 are interaction with PRMT3; that stretch reads RRTRRWYTCP…HSACKTRKQK (150 aa). C2H2-type zinc fingers lie at residues 252–274, 280–302, 308–330, 336–358, and 364–386; these read YTCPLCGKQFNESSYLISHQRTH, YDCNHCGKSFNHKTNLNKHERIH, YSCSQCGKNFRQNSHRSRHEGIH, FKCPECGKTFPKNEEFVLHLQSH, and YGCKKCGRRFGRLSNCTRHEKTH.

Interacts (via C-terminus) with PRMT3 (via zinc-finger); the interaction is direct and required to localize protein arginine N-methyltransferase PRMT3 to the nucleus and inhibit its proteasomal degradation. Highly expressed in testis, weakly expressed in spleen, thymus, prostate, ovary, small intestine colon and peripheral blood leukocytes.

It is found in the nucleus. In terms of biological role, localizes protein arginine N-methyltransferase PRMT3 to the nucleus. The chain is Zinc finger protein 200 (ZNF200) from Homo sapiens (Human).